The chain runs to 538 residues: Transmembrane protein 266 (538 aa).

Over 1-102 (MALVTSFNMA…VFLLSASLNS (102 aa)) the chain is Cytoplasmic. The helical transmembrane segment at 103 to 123 (FLVACVILVVILLTLELLIDT) threads the bilayer. Topologically, residues 124–130 (KLLQFSN) are extracellular. The helical transmembrane segment at 131–151 (AFQFAGVIHWISLVILSVFFS) threads the bilayer. The Cytoplasmic segment spans residues 152-169 (ETVLRIVVLGIWDYIENK). The chain crosses the membrane as a helical span at residues 170–190 (IEVFDGAVIILSLAPMVASTV). At 191 to 199 (ANGPRSPWD) the chain is on the extracellular side. Residues 200–220 (AISLIIMFRIWRVKRVIDAYV) form a helical membrane-spanning segment. Residues 221-538 (LPVKLEMEMV…EPKLHTVPEA (318 aa)) are Cytoplasmic-facing. The stretch at 232-278 (QQYEKAKAIQDEQLERLTQICQEQGFEIRQLRAHLAQQDLDLAAERE) forms a coiled coil. Disordered regions lie at residues 380–435 (NSTC…PLPL) and 453–483 (SSLSKDPCPSHKALDPAPLAQPTPLGSVQTS). The span at 381 to 396 (STCASATSETTSHSTC) shows a compositional bias: low complexity. Over residues 397–417 (GSVTRAQSASSQTLGSSTDCS) the composition is skewed to polar residues. Positions 425 to 434 (PSKPRSSPLP) are enriched in low complexity.

Homodimer; disulfide-linked. In terms of tissue distribution, in brain, present in the granule layer of the cerebellar cortex. Localizes on the post-synaptic side of glutamatergic mossy fibers and granule cells in the cerebellum (at protein level). Predominantly expressed in granule cells in cerebellum (at protein level).

It is found in the cell projection. It localises to the dendrite. The protein localises to the perikaryon. The protein resides in the cell membrane. Its function is as follows. Voltage-sensor protein present on the post-synaptic side of glutamatergic mossy fibers and granule cells in the cerebellum. Despite the presence of a voltage-sensor segment, does not form a functional ion channel and its precise role remains unclear. Undergoes both rapid and slow structural rearrangements in response to changes in voltage. Contains a zinc-binding site that can regulate the slow conformational transition. This is Transmembrane protein 266 from Mus musculus (Mouse).